Here is a 384-residue protein sequence, read N- to C-terminus: 1-deoxy-D-xylulose 5-phosphate reductoisomerase (384 aa).

Residues Thr10, Gly11, Ser12, Ile13, Arg37, Asn38, and Asn124 each coordinate NADPH. Residue Lys125 participates in 1-deoxy-D-xylulose 5-phosphate binding. Glu126 contributes to the NADPH binding site. Asp150 contributes to the Mn(2+) binding site. 4 residues coordinate 1-deoxy-D-xylulose 5-phosphate: Ser151, Glu152, Ser176, and His199. Glu152 is a binding site for Mn(2+). Gly205 contacts NADPH. 1-deoxy-D-xylulose 5-phosphate is bound by residues Ser212, Asn217, Lys218, and Glu221. Glu221 provides a ligand contact to Mn(2+).

This sequence belongs to the DXR family. It depends on Mg(2+) as a cofactor. Mn(2+) serves as cofactor.

The enzyme catalyses 2-C-methyl-D-erythritol 4-phosphate + NADP(+) = 1-deoxy-D-xylulose 5-phosphate + NADPH + H(+). It functions in the pathway isoprenoid biosynthesis; isopentenyl diphosphate biosynthesis via DXP pathway; isopentenyl diphosphate from 1-deoxy-D-xylulose 5-phosphate: step 1/6. In terms of biological role, catalyzes the NADPH-dependent rearrangement and reduction of 1-deoxy-D-xylulose-5-phosphate (DXP) to 2-C-methyl-D-erythritol 4-phosphate (MEP). This is 1-deoxy-D-xylulose 5-phosphate reductoisomerase from Clostridium perfringens (strain SM101 / Type A).